The chain runs to 101 residues: MAKKSSVAREAKRRRLVEANFKKRSDLRKIVKSLSVSEEEKENARISLNKMKRDTSPTRLHNRCLLTGRPRGYLRKFAISRICFRQMASMGEIPGVIKASW.

The protein belongs to the universal ribosomal protein uS14 family. In terms of assembly, part of the 30S ribosomal subunit. Contacts proteins S3 and S10.

In terms of biological role, binds 16S rRNA, required for the assembly of 30S particles and may also be responsible for determining the conformation of the 16S rRNA at the A site. The polypeptide is Small ribosomal subunit protein uS14 (Chlamydia pneumoniae (Chlamydophila pneumoniae)).